A 949-amino-acid polypeptide reads, in one-letter code: Nonsense-mediated mRNA decay factor SMG8 (949 aa).

Disordered stretches follow at residues 564 to 607 (SGAR…LSPT), 624 to 652 (NESQ…DTEN), and 748 to 768 (PKQQ…QQRW). The segment covering 571–581 (EGDDEPEDEVV) has biased composition (acidic residues). Positions 594 to 607 (NTASNGCSQPLSPT) are enriched in polar residues. Positions 624–648 (NESQASSEQLSNSEQNTSSSGTSSA) are enriched in low complexity. Basic residues predominate over residues 749–768 (KQQHHTHHQQQHPGKKQQRW).

It belongs to the SMG8 family.

Involved in nonsense-mediated decay (NMD) of mRNAs containing premature stop codons. Probable component of kinase complex containing nonC and recruited to stalled ribosomes. The chain is Nonsense-mediated mRNA decay factor SMG8 from Drosophila erecta (Fruit fly).